Consider the following 226-residue polypeptide: MKISYHGHSVVRIETNGKTILIDPFITGNTTTDLNAADVKADVILLTHGHGDHVGDTVEIAKRNNALVVATFELATYLSWQGVETFGMNIGGAREFDFGTVKFTQAFHSSGFVTEDKQIIYLGMPTGILFTAEGKTIYHAGDTGLFSDMKLIGERHSIDVAFLPIGDSFTMGPEDAAVAAEWLGAKLVVPIHYNTFPPIAQDPQQFVSLLPPGVGRALQPGESIEL.

The protein belongs to the UPF0173 family.

The protein is UPF0173 metal-dependent hydrolase GTNG_2675 of Geobacillus thermodenitrificans (strain NG80-2).